Consider the following 145-residue polypeptide: Mannitol-specific phosphotransferase enzyme IIA component (145 aa).

One can recognise a PTS EIIA type-2 domain in the interval 2-145 (ENLTNISIEL…EEITENLAIA (144 aa)). H62 acts as the Tele-phosphohistidine intermediate in catalysis. Position 62 is a phosphohistidine; by HPr (H62).

It localises to the cytoplasm. Functionally, the phosphoenolpyruvate-dependent sugar phosphotransferase system (sugar PTS), a major carbohydrate active transport system, catalyzes the phosphorylation of incoming sugar substrates concomitantly with their translocation across the cell membrane. The enzyme II CmtAB PTS system is involved in D-mannitol transport. The polypeptide is Mannitol-specific phosphotransferase enzyme IIA component (Enterococcus faecalis (strain ATCC 700802 / V583)).